A 230-amino-acid chain; its full sequence is Germin-like protein 5-1 (230 aa).

The first 20 residues, 1 to 20 (MAMVGRSLLLLLLLVTLAAG), serve as a signal peptide directing secretion. Cysteine 38 and cysteine 53 form a disulfide bridge. Residues 86–219 (YGFTARSVDI…TLLTDEATVD (134 aa)) enclose the Cupin type-1 domain. The Mn(2+) site is built by histidine 119, histidine 121, glutamate 126, and histidine 167. Asparagine 172 is a glycosylation site (N-linked (GlcNAc...) asparagine).

Belongs to the germin family. Oligomer (believed to be a pentamer but probably hexamer).

The protein resides in the secreted. It localises to the extracellular space. The protein localises to the apoplast. In terms of biological role, may play a role in plant defense. Probably has no oxalate oxidase activity even if the active site is conserved. The polypeptide is Germin-like protein 5-1 (Oryza sativa subsp. japonica (Rice)).